The following is a 336-amino-acid chain: Succinylglutamate desuccinylase (336 aa).

Zn(2+) contacts are provided by histidine 59, glutamate 62, and histidine 151. Glutamate 215 is an active-site residue.

Belongs to the AspA/AstE family. Succinylglutamate desuccinylase subfamily. The cofactor is Zn(2+).

The enzyme catalyses N-succinyl-L-glutamate + H2O = L-glutamate + succinate. It participates in amino-acid degradation; L-arginine degradation via AST pathway; L-glutamate and succinate from L-arginine: step 5/5. In terms of biological role, transforms N(2)-succinylglutamate into succinate and glutamate. The chain is Succinylglutamate desuccinylase from Pseudomonas fluorescens (strain Pf0-1).